Consider the following 414-residue polypeptide: Serine hydroxymethyltransferase (414 aa).

Residues Leu-121 and 125–127 contribute to the (6S)-5,6,7,8-tetrahydrofolate site; that span reads GHL. The residue at position 229 (Lys-229) is an N6-(pyridoxal phosphate)lysine.

It belongs to the SHMT family. Homodimer. Pyridoxal 5'-phosphate is required as a cofactor.

The protein localises to the cytoplasm. It catalyses the reaction (6R)-5,10-methylene-5,6,7,8-tetrahydrofolate + glycine + H2O = (6S)-5,6,7,8-tetrahydrofolate + L-serine. The protein operates within one-carbon metabolism; tetrahydrofolate interconversion. It functions in the pathway amino-acid biosynthesis; glycine biosynthesis; glycine from L-serine: step 1/1. Catalyzes the reversible interconversion of serine and glycine with tetrahydrofolate (THF) serving as the one-carbon carrier. This reaction serves as the major source of one-carbon groups required for the biosynthesis of purines, thymidylate, methionine, and other important biomolecules. Also exhibits THF-independent aldolase activity toward beta-hydroxyamino acids, producing glycine and aldehydes, via a retro-aldol mechanism. The sequence is that of Serine hydroxymethyltransferase from Acidovorax ebreus (strain TPSY) (Diaphorobacter sp. (strain TPSY)).